The sequence spans 436 residues: GTPase Obg (436 aa).

Positions 2–160 (SMFLDTAKIQ…RELLLELKVL (159 aa)) constitute an Obg domain. The region spanning 161 to 338 (ADVGLVGFPS…LLDATAELLD (178 aa)) is the OBG-type G domain. GTP-binding positions include 167-174 (GFPSVGKS), 192-196 (FTTIV), 214-217 (DLPG), 284-287 (NKMD), and 319-321 (SSL). Mg(2+) contacts are provided by Ser174 and Thr194. One can recognise an OCT domain in the interval 358–436 (GFDEEAPAFE…IGKFEFEFVD (79 aa)).

This sequence belongs to the TRAFAC class OBG-HflX-like GTPase superfamily. OBG GTPase family. Monomer. Requires Mg(2+) as cofactor.

Its subcellular location is the cytoplasm. In terms of biological role, an essential GTPase which binds GTP, GDP and possibly (p)ppGpp with moderate affinity, with high nucleotide exchange rates and a fairly low GTP hydrolysis rate. Plays a role in control of the cell cycle, stress response, ribosome biogenesis and in those bacteria that undergo differentiation, in morphogenesis control. This is GTPase Obg from Streptococcus sanguinis (strain SK36).